A 412-amino-acid chain; its full sequence is Proteasome-activating nucleotidase 2 (412 aa).

The stretch at Leu-28–Ser-74 forms a coiled coil. Residues Gly-196–Met-201 and His-335 contribute to the ATP site. Residues Asp-409–Tyr-412 form a docks into pockets in the proteasome alpha-ring to cause gate opening region.

Belongs to the AAA ATPase family. Homohexamer. The hexameric complex has a two-ring architecture resembling a top hat that caps the 20S proteasome core at one or both ends. Upon ATP-binding, the C-terminus of PAN interacts with the alpha-rings of the proteasome core by binding to the intersubunit pockets.

It localises to the cytoplasm. ATPase which is responsible for recognizing, binding, unfolding and translocation of substrate proteins into the archaeal 20S proteasome core particle. Is essential for opening the gate of the 20S proteasome via an interaction with its C-terminus, thereby allowing substrate entry and access to the site of proteolysis. Thus, the C-termini of the proteasomal ATPase function like a 'key in a lock' to induce gate opening and therefore regulate proteolysis. Unfolding activity requires energy from ATP hydrolysis, whereas ATP binding alone promotes ATPase-20S proteasome association which triggers gate opening, and supports translocation of unfolded substrates. The sequence is that of Proteasome-activating nucleotidase 2 from Haloferax volcanii (strain ATCC 29605 / DSM 3757 / JCM 8879 / NBRC 14742 / NCIMB 2012 / VKM B-1768 / DS2) (Halobacterium volcanii).